A 1220-amino-acid chain; its full sequence is DNA polymerase catalytic subunit (1220 aa).

Disordered stretches follow at residues 21 to 43 and 641 to 691; these read GKRP…RPPQ and QADA…KPGV. Residues 646-660 show a composition bias toward polar residues; it reads SETSELAMDSQSHAF.

Belongs to the DNA polymerase type-B family. As to quaternary structure, forms a complex with the ssDNA-binding protein, the DNA polymerase processivity factor, and the alkaline exonuclease. Interacts with the helicase-primase complex composed of the primase, the helicase and the primase-associated factor; this interaction may coordinate leading and lagging strand DNA synthesis at the replication fork.

The protein resides in the host nucleus. It catalyses the reaction DNA(n) + a 2'-deoxyribonucleoside 5'-triphosphate = DNA(n+1) + diphosphate. The enzyme catalyses Endonucleolytic cleavage to 5'-phosphomonoester.. In terms of biological role, replicates viral genomic DNA. The replication complex is composed of six viral proteins: the DNA polymerase, processivity factor, primase, primase-associated factor, helicase, and ssDNA-binding protein. Additionally, the polymerase contains an intrinsic ribonuclease H (RNase H) activity that specifically degrades RNA/DNA heteroduplexes or duplex DNA substrates in the 5' to 3' direction. Therefore, it can catalyze the excision of the RNA primers that initiate the synthesis of Okazaki fragments at a replication fork during viral DNA replication. The chain is DNA polymerase catalytic subunit from Equus caballus (Horse).